A 222-amino-acid polypeptide reads, in one-letter code: Collectrin (222 aa).

A signal peptide spans 1-14 (MLWALFFLVTTIHA). Residues 15–141 (ELCHPDAENA…LAPPMEPSVP (127 aa)) lie on the Extracellular side of the membrane. The Collectrin-like domain maps to 21-222 (AENAFKVRLS…LTEDERLTPL (202 aa)). Asparagine 76 and asparagine 93 each carry an N-linked (GlcNAc...) asparagine glycan. A helical transmembrane segment spans residues 142-162 (VWIIVFGVIFCIVTVAIALLV). Over 163 to 222 (LSGIRQRRRNNKGPPGVEDAEDKCENIITIENGIPCDPLDMKGGHINDGFLTEDERLTPL) the chain is Cytoplasmic. Phosphothreonine occurs at positions 214 and 220.

It belongs to the CLTRN family. Monomer. Homodimer. Homodimer; dimerization prevents CLTRN cleavage by BACE2. Interacts with SNAPIN. Interacts with SLC6A18; this interaction regulates the trafficking of SLC6A18 to the cell membrane and its amino acid transporter activity. Interacts with SLC6A19; this interaction regulates the trafficking of SLC6A19 to the cell membrane and its amino acid transporter activity. Interacts with SLC6A20B. Post-translationally, glycosylated. Glycosylation is required for plasma membrane localization and for its cleavage by BACE2. Proteolytically processed in pancreatic beta cells by BACE2 leading to the generation and extracellular release of soluble CLTRN, and a corresponding cell-associated C-terminal fragment which is later cleaved by gamma-secretase. This shedding process inactivates CLTRN. Three cleavage sites have been identified for BACE2, two clustered sites after Phe-116 and Leu-118 and a more membrane proximal site at Phe-125; the preferred BACE2 cleavage site seems to be between Phe-125 and Leu-126, Phe-116 and Leu-118 act as alternative sites. As to expression, expressed on the apical surface of the proximal tubules in the renal cortex (at protein level). Kidney; collecting ducts and proximal tubule. Pancreas; beta cells of islets. Expressed in the cerebral cortex, hippocampus, brainstem and cerebellum.

It localises to the cell membrane. Its function is as follows. Plays an important role in amino acid transport by acting as binding partner of amino acid transporters SLC6A18 and SLC6A19, regulating their trafficking on the cell surface and their activity. May also play a role in trafficking of amino acid transporters SLC3A1 and SLC7A9 to the renal cortical cell membrane. Regulator of SNARE complex function. Stimulator of beta cell replication. The polypeptide is Collectrin (Mus musculus (Mouse)).